The sequence spans 207 residues: Dephospho-CoA kinase (207 aa).

The DPCK domain occupies 10–207 (ILGLTGGIGS…FYLTLRGGQS (198 aa)). 18-23 (GSGKSA) contributes to the ATP binding site.

Belongs to the CoaE family.

It localises to the cytoplasm. It catalyses the reaction 3'-dephospho-CoA + ATP = ADP + CoA + H(+). It functions in the pathway cofactor biosynthesis; coenzyme A biosynthesis; CoA from (R)-pantothenate: step 5/5. Functionally, catalyzes the phosphorylation of the 3'-hydroxyl group of dephosphocoenzyme A to form coenzyme A. This chain is Dephospho-CoA kinase, found in Pseudomonas syringae pv. syringae (strain B728a).